A 386-amino-acid polypeptide reads, in one-letter code: Methionyl-tRNA formyltransferase, mitochondrial (386 aa).

Belongs to the Fmt family.

The protein resides in the mitochondrion. The catalysed reaction is L-methionyl-tRNA(fMet) + (6R)-10-formyltetrahydrofolate = N-formyl-L-methionyl-tRNA(fMet) + (6S)-5,6,7,8-tetrahydrofolate + H(+). In terms of biological role, methionyl-tRNA formyltransferase that formylates methionyl-tRNA in mitochondria and is crucial for translation initiation. This chain is Methionyl-tRNA formyltransferase, mitochondrial (Mtfmt), found in Mus musculus (Mouse).